A 254-amino-acid polypeptide reads, in one-letter code: MTSVPTVSDSKRAFYAAYPRPINPLYRRVVEELLVEIHLLSVNTSFVYDPLFALGVVTAFDSFMSSYRPIEAVGPLFTALTQAVRQNPEQYRHDANAIAEQVRGVGSDTIRQWLTEAEALGNAPELVRSSFQAIAGRSEFKYSRLFAIGLFSLLETAAPDLVQDPEALKTTVTAIAERFHLPSDKLQKDLDLYRSNLEKMEQARITMEEAIQADRRKREQREQEKLAKAAAAEAPAALEASSDNPEPETSETPS.

A coiled-coil region spans residues Ser183–Lys217. Over residues Ala213–Ala227 the composition is skewed to basic and acidic residues. The disordered stretch occupies residues Ala213–Ser254. Low complexity predominate over residues Lys228–Ala240. Over residues Pro245–Ser254 the composition is skewed to acidic residues.

The protein belongs to the THF1 family.

Its function is as follows. May be involved in photosynthetic membrane biogenesis. The chain is Protein Thf1 from Synechococcus elongatus (strain ATCC 33912 / PCC 7942 / FACHB-805) (Anacystis nidulans R2).